The following is a 421-amino-acid chain: Gamma-glutamyl phosphate reductase (421 aa).

Belongs to the gamma-glutamyl phosphate reductase family.

Its subcellular location is the cytoplasm. The catalysed reaction is L-glutamate 5-semialdehyde + phosphate + NADP(+) = L-glutamyl 5-phosphate + NADPH + H(+). It functions in the pathway amino-acid biosynthesis; L-proline biosynthesis; L-glutamate 5-semialdehyde from L-glutamate: step 2/2. Catalyzes the NADPH-dependent reduction of L-glutamate 5-phosphate into L-glutamate 5-semialdehyde and phosphate. The product spontaneously undergoes cyclization to form 1-pyrroline-5-carboxylate. This chain is Gamma-glutamyl phosphate reductase, found in Pseudomonas paraeruginosa (strain DSM 24068 / PA7) (Pseudomonas aeruginosa (strain PA7)).